A 393-amino-acid chain; its full sequence is NAD(P)H-quinone oxidoreductase subunit H, chloroplastic (393 aa).

Belongs to the complex I 49 kDa subunit family. As to quaternary structure, NDH is composed of at least 16 different subunits, 5 of which are encoded in the nucleus.

It localises to the plastid. Its subcellular location is the chloroplast thylakoid membrane. It carries out the reaction a plastoquinone + NADH + (n+1) H(+)(in) = a plastoquinol + NAD(+) + n H(+)(out). The catalysed reaction is a plastoquinone + NADPH + (n+1) H(+)(in) = a plastoquinol + NADP(+) + n H(+)(out). Its function is as follows. NDH shuttles electrons from NAD(P)H:plastoquinone, via FMN and iron-sulfur (Fe-S) centers, to quinones in the photosynthetic chain and possibly in a chloroplast respiratory chain. The immediate electron acceptor for the enzyme in this species is believed to be plastoquinone. Couples the redox reaction to proton translocation, and thus conserves the redox energy in a proton gradient. The polypeptide is NAD(P)H-quinone oxidoreductase subunit H, chloroplastic (Pelargonium hortorum (Common geranium)).